The primary structure comprises 415 residues: 26S proteasome regulatory subunit 6B (415 aa).

203-210 (GPPGCGKT) is a binding site for ATP.

The protein belongs to the AAA ATPase family.

Its subcellular location is the cytoplasm. The protein resides in the nucleus. Its function is as follows. The 26S proteasome is involved in the ATP-dependent degradation of ubiquitinated proteins. The regulatory (or ATPase) complex confers ATP dependency and substrate specificity to the 26S complex. In Manduca sexta (Tobacco hawkmoth), this protein is 26S proteasome regulatory subunit 6B.